The chain runs to 523 residues: Putative F-box protein At1g30925 (523 aa).

The F-box domain maps to 4–44 (FPNDDLVYEILLRLPAKSVARCSCVSKLRRSILSRQDFTEL).

This Arabidopsis thaliana (Mouse-ear cress) protein is Putative F-box protein At1g30925.